The sequence spans 227 residues: Thymidine kinase (227 aa).

ATP contacts are provided by residues 15–22 (GSMFSGKT) and 87–90 (DEAQ). The Proton acceptor role is filled by E88. Zn(2+)-binding residues include C144, C147, C176, and C179. The disordered stretch occupies residues 198–227 (RAVATDDADASTNEADPEAADAASADGTAA). A compositionally biased stretch (low complexity) spans 217–227 (ADAASADGTAA).

Belongs to the thymidine kinase family. As to quaternary structure, homotetramer.

The protein localises to the cytoplasm. The catalysed reaction is thymidine + ATP = dTMP + ADP + H(+). The protein is Thymidine kinase of Salinibacter ruber (strain DSM 13855 / M31).